Here is a 253-residue protein sequence, read N- to C-terminus: Imidazole glycerol phosphate synthase subunit HisF (253 aa).

Catalysis depends on residues aspartate 11 and aspartate 130.

Belongs to the HisA/HisF family. Heterodimer of HisH and HisF.

It localises to the cytoplasm. It carries out the reaction 5-[(5-phospho-1-deoxy-D-ribulos-1-ylimino)methylamino]-1-(5-phospho-beta-D-ribosyl)imidazole-4-carboxamide + L-glutamine = D-erythro-1-(imidazol-4-yl)glycerol 3-phosphate + 5-amino-1-(5-phospho-beta-D-ribosyl)imidazole-4-carboxamide + L-glutamate + H(+). Its pathway is amino-acid biosynthesis; L-histidine biosynthesis; L-histidine from 5-phospho-alpha-D-ribose 1-diphosphate: step 5/9. In terms of biological role, IGPS catalyzes the conversion of PRFAR and glutamine to IGP, AICAR and glutamate. The HisF subunit catalyzes the cyclization activity that produces IGP and AICAR from PRFAR using the ammonia provided by the HisH subunit. The protein is Imidazole glycerol phosphate synthase subunit HisF of Gluconobacter oxydans (strain 621H) (Gluconobacter suboxydans).